Here is a 79-residue protein sequence, read N- to C-terminus: D-alanyl carrier protein (79 aa).

One can recognise a Carrier domain in the interval 2-79; the sequence is AEFKEQVLDI…MVIKKLEEIR (78 aa). S37 carries the post-translational modification O-(pantetheine 4'-phosphoryl)serine.

It belongs to the DltC family. 4'-phosphopantetheine is transferred from CoA to a specific serine of apo-DCP.

It localises to the cytoplasm. Its pathway is cell wall biogenesis; lipoteichoic acid biosynthesis. Functionally, carrier protein involved in the D-alanylation of lipoteichoic acid (LTA). The loading of thioester-linked D-alanine onto DltC is catalyzed by D-alanine--D-alanyl carrier protein ligase DltA. The DltC-carried D-alanyl group is further transferred to cell membrane phosphatidylglycerol (PG) by forming an ester bond, probably catalyzed by DltD. D-alanylation of LTA plays an important role in modulating the properties of the cell wall in Gram-positive bacteria, influencing the net charge of the cell wall. This Bacillus anthracis (strain CDC 684 / NRRL 3495) protein is D-alanyl carrier protein.